A 270-amino-acid polypeptide reads, in one-letter code: tRNA pseudouridine synthase A (270 aa).

The active-site Nucleophile is Asp-51. A substrate-binding site is contributed by Tyr-109.

The protein belongs to the tRNA pseudouridine synthase TruA family. In terms of assembly, homodimer.

The catalysed reaction is uridine(38/39/40) in tRNA = pseudouridine(38/39/40) in tRNA. In terms of biological role, formation of pseudouridine at positions 38, 39 and 40 in the anticodon stem and loop of transfer RNAs. The sequence is that of tRNA pseudouridine synthase A from Burkholderia ambifaria (strain ATCC BAA-244 / DSM 16087 / CCUG 44356 / LMG 19182 / AMMD) (Burkholderia cepacia (strain AMMD)).